Reading from the N-terminus, the 406-residue chain is Tryptophan 2,3-dioxygenase (406 aa).

Substrate contacts are provided by residues Phe72–His76 and Arg144. His328 serves as a coordination point for heme. Substrate is bound at residue Thr342.

It belongs to the tryptophan 2,3-dioxygenase family. Homotetramer. Dimer of dimers. Heme serves as cofactor.

The enzyme catalyses L-tryptophan + O2 = N-formyl-L-kynurenine. Its pathway is amino-acid degradation; L-tryptophan degradation via kynurenine pathway; L-kynurenine from L-tryptophan: step 1/2. Functionally, heme-dependent dioxygenase that catalyzes the oxidative cleavage of the L-tryptophan (L-Trp) pyrrole ring and converts L-tryptophan to N-formyl-L-kynurenine. Catalyzes the oxidative cleavage of the indole moiety. This Homo sapiens (Human) protein is Tryptophan 2,3-dioxygenase.